A 580-amino-acid polypeptide reads, in one-letter code: Benzoate--CoA ligase, peroxisomal (580 aa).

Residues 578–580 carry the Microbody targeting signal motif; sequence SRL.

This sequence belongs to the ATP-dependent AMP-binding enzyme family.

The protein resides in the peroxisome. It catalyses the reaction benzoate + ATP + CoA = benzoyl-CoA + AMP + diphosphate. In terms of biological role, benzoate--CoA ligase involved in benzoyloxyglucosinolate biosynthesis in seeds. Glucosinolates are secondary metabolites involved in pathogen and insect defense of cruciferous plants. The chain is Benzoate--CoA ligase, peroxisomal (AAE20) from Arabidopsis thaliana (Mouse-ear cress).